Here is a 237-residue protein sequence, read N- to C-terminus: Neural retina-specific leucine zipper protein (237 aa).

Residues K20 and K24 each participate in a glycyl lysine isopeptide (Lys-Gly) (interchain with G-Cter in SUMO) cross-link. Residues E26–A64 form a disordered region. The segment at G30–D93 is minimal transactivation domain (MTD). A basic motif region spans residues R159–R185. The bZIP domain occupies R159 to L222. A leucine-zipper region spans residues L187 to L208.

The protein belongs to the bZIP family. As to quaternary structure, interacts with FIZ1; this interaction represses transactivation. Interacts (via the leucine-zipper domain) with CRX. Disumoylated at Lys-20. Sumoylation modulates the transcriptional activity of NRL on RHO and NR2E3 promoters, and is required for normal rod differentiation. Post-translationally, phosphorylated. As to expression, expressed in the retina (at protein level).

The protein resides in the cytoplasm. It is found in the nucleus. Acts as a transcriptional activator which regulates the expression of several rod-specific genes, including RHO and PDE6B. Also functions as a transcriptional coactivator, stimulating transcription mediated by the transcription factor CRX and NR2E3. Binds to the rhodopsin promoter in a sequence-specific manner. This Mus musculus (Mouse) protein is Neural retina-specific leucine zipper protein (Nrl).